Consider the following 235-residue polypeptide: Large ribosomal subunit protein uL1 (235 aa).

Belongs to the universal ribosomal protein uL1 family. In terms of assembly, part of the 50S ribosomal subunit.

In terms of biological role, binds directly to 23S rRNA. The L1 stalk is quite mobile in the ribosome, and is involved in E site tRNA release. Protein L1 is also a translational repressor protein, it controls the translation of the L11 operon by binding to its mRNA. This chain is Large ribosomal subunit protein uL1, found in Lawsonia intracellularis (strain PHE/MN1-00).